Here is a 285-residue protein sequence, read N- to C-terminus: Probable endonuclease 4 (285 aa).

Positions 69, 109, 145, 179, 182, 216, 229, 231, and 261 each coordinate Zn(2+).

The protein belongs to the AP endonuclease 2 family. The cofactor is Zn(2+).

It carries out the reaction Endonucleolytic cleavage to 5'-phosphooligonucleotide end-products.. In terms of biological role, endonuclease IV plays a role in DNA repair. It cleaves phosphodiester bonds at apurinic or apyrimidinic (AP) sites, generating a 3'-hydroxyl group and a 5'-terminal sugar phosphate. This Citrobacter koseri (strain ATCC BAA-895 / CDC 4225-83 / SGSC4696) protein is Probable endonuclease 4.